Reading from the N-terminus, the 382-residue chain is UDP-4-amino-4-deoxy-L-arabinose--oxoglutarate aminotransferase (382 aa).

Lys-183 carries the post-translational modification N6-(pyridoxal phosphate)lysine.

Belongs to the DegT/DnrJ/EryC1 family. ArnB subfamily. In terms of assembly, homodimer. The cofactor is pyridoxal 5'-phosphate.

It catalyses the reaction UDP-4-amino-4-deoxy-beta-L-arabinose + 2-oxoglutarate = UDP-beta-L-threo-pentopyranos-4-ulose + L-glutamate. The protein operates within nucleotide-sugar biosynthesis; UDP-4-deoxy-4-formamido-beta-L-arabinose biosynthesis; UDP-4-deoxy-4-formamido-beta-L-arabinose from UDP-alpha-D-glucuronate: step 2/3. It functions in the pathway bacterial outer membrane biogenesis; lipopolysaccharide biosynthesis. Catalyzes the conversion of UDP-4-keto-arabinose (UDP-Ara4O) to UDP-4-amino-4-deoxy-L-arabinose (UDP-L-Ara4N). The modified arabinose is attached to lipid A and is required for resistance to polymyxin and cationic antimicrobial peptides. The chain is UDP-4-amino-4-deoxy-L-arabinose--oxoglutarate aminotransferase from Pseudomonas syringae pv. syringae (strain B728a).